Consider the following 466-residue polypeptide: ATP synthase subunit beta (466 aa).

Residue 155–162 (GGAGVGKT) participates in ATP binding.

Belongs to the ATPase alpha/beta chains family. As to quaternary structure, F-type ATPases have 2 components, CF(1) - the catalytic core - and CF(0) - the membrane proton channel. CF(1) has five subunits: alpha(3), beta(3), gamma(1), delta(1), epsilon(1). CF(0) has three main subunits: a(1), b(2) and c(9-12). The alpha and beta chains form an alternating ring which encloses part of the gamma chain. CF(1) is attached to CF(0) by a central stalk formed by the gamma and epsilon chains, while a peripheral stalk is formed by the delta and b chains.

Its subcellular location is the cell inner membrane. The enzyme catalyses ATP + H2O + 4 H(+)(in) = ADP + phosphate + 5 H(+)(out). In terms of biological role, produces ATP from ADP in the presence of a proton gradient across the membrane. The catalytic sites are hosted primarily by the beta subunits. This is ATP synthase subunit beta from Bordetella avium (strain 197N).